Consider the following 89-residue polypeptide: Small ribosomal subunit protein uS15 (89 aa).

Belongs to the universal ribosomal protein uS15 family. In terms of assembly, part of the 30S ribosomal subunit. Forms a bridge to the 50S subunit in the 70S ribosome, contacting the 23S rRNA.

Functionally, one of the primary rRNA binding proteins, it binds directly to 16S rRNA where it helps nucleate assembly of the platform of the 30S subunit by binding and bridging several RNA helices of the 16S rRNA. In terms of biological role, forms an intersubunit bridge (bridge B4) with the 23S rRNA of the 50S subunit in the ribosome. In Shewanella baltica (strain OS223), this protein is Small ribosomal subunit protein uS15.